The sequence spans 42 residues: Photosystem II reaction center protein J (42 aa).

The helical transmembrane segment at 12–32 (LWFVGMIVGLAALGLLGIFFY) threads the bilayer.

The protein belongs to the PsbJ family. PSII is composed of 1 copy each of membrane proteins PsbA, PsbB, PsbC, PsbD, PsbE, PsbF, PsbH, PsbI, PsbJ, PsbK, PsbL, PsbM, PsbT, PsbX, PsbY, PsbZ, Psb30/Ycf12, at least 3 peripheral proteins of the oxygen-evolving complex and a large number of cofactors. It forms dimeric complexes.

Its subcellular location is the plastid. It localises to the chloroplast thylakoid membrane. Its function is as follows. One of the components of the core complex of photosystem II (PSII). PSII is a light-driven water:plastoquinone oxidoreductase that uses light energy to abstract electrons from H(2)O, generating O(2) and a proton gradient subsequently used for ATP formation. It consists of a core antenna complex that captures photons, and an electron transfer chain that converts photonic excitation into a charge separation. This chain is Photosystem II reaction center protein J, found in Nephroselmis olivacea (Green alga).